Consider the following 195-residue polypeptide: Achaete-scute homolog 1b (195 aa).

Residues 66–118 (MAVARRNERERNRVKQVNMGFQTLRQHVPNGAANKKMSKVETLRSAVEYIRAL) enclose the bHLH domain. The interval 141–164 (VSNAYSAGPESPHSAYSSDEGSYE) is disordered.

As to quaternary structure, efficient DNA binding requires dimerization with another bHLH protein. In the 24 hours embryo, expressed in hindbrain close to the anterior and posterior boundaries of rhombomeres 2-6 and in ventral cells close to the floor plate of most rhombomeres. Also expressed in the telencephalon, diencephalon, tegmentum and spinal cord at sites distinct from those expressing ascl1a. Not expressed in the adenohypophysis.

The protein resides in the nucleus. Its function is as follows. Transcriptional regulator. May mediate transcription activation by binding to the E box-containing promoter. Involved in neurogenesis. Involved in maintaining rhombomere boundaries in the hindbrain, probably via up-regulation of delta expression. May mediate transcription activation by binding to the E box-containing promoter. This Danio rerio (Zebrafish) protein is Achaete-scute homolog 1b.